The primary structure comprises 159 residues: Large ribosomal subunit protein uL15 (159 aa).

Residues 1–11 (MKLNELRDNEG) are compositionally biased toward basic and acidic residues. Positions 1 to 40 (MKLNELRDNEGARYQSKRLGRGIGSGKGKTSGKGVKGQTS) are disordered. A compositionally biased stretch (gly residues) spans 21–35 (RGIGSGKGKTSGKGV).

Belongs to the universal ribosomal protein uL15 family. In terms of assembly, part of the 50S ribosomal subunit.

Functionally, binds to the 23S rRNA. The protein is Large ribosomal subunit protein uL15 of Paramagnetospirillum magneticum (strain ATCC 700264 / AMB-1) (Magnetospirillum magneticum).